Reading from the N-terminus, the 198-residue chain is Carnitine operon protein CaiE (198 aa).

The interval 179 to 198 (VEENRPRLKGTTDVKPKSAQ) is disordered. Basic and acidic residues predominate over residues 180–198 (EENRPRLKGTTDVKPKSAQ).

Belongs to the transferase hexapeptide repeat family.

The protein operates within amine and polyamine metabolism; carnitine metabolism. In terms of biological role, overproduction of CaiE stimulates the activity of CaiB and CaiD. In Salmonella agona (strain SL483), this protein is Carnitine operon protein CaiE.